The sequence spans 331 residues: tRNA(Ile)-lysidine synthase (331 aa).

An ATP-binding site is contributed by 29-34 (SGGPDS).

Belongs to the tRNA(Ile)-lysidine synthase family.

It localises to the cytoplasm. It catalyses the reaction cytidine(34) in tRNA(Ile2) + L-lysine + ATP = lysidine(34) in tRNA(Ile2) + AMP + diphosphate + H(+). Its function is as follows. Ligates lysine onto the cytidine present at position 34 of the AUA codon-specific tRNA(Ile) that contains the anticodon CAU, in an ATP-dependent manner. Cytidine is converted to lysidine, thus changing the amino acid specificity of the tRNA from methionine to isoleucine. The protein is tRNA(Ile)-lysidine synthase of Chlorobaculum tepidum (strain ATCC 49652 / DSM 12025 / NBRC 103806 / TLS) (Chlorobium tepidum).